The sequence spans 338 residues: Putative pectinesterase 63 (338 aa).

Positions 1 to 24 are cleaved as a signal peptide; that stretch reads MGYNYVSLIVTILLVVITSPVVFG. Residues Thr116 and Gln151 each coordinate substrate. The active-site Proton donor is Asp174. The active-site Nucleophile is the Asp195. Residue Arg252 coordinates substrate.

The protein belongs to the pectinesterase family.

Its subcellular location is the secreted. It is found in the cell wall. It catalyses the reaction [(1-&gt;4)-alpha-D-galacturonosyl methyl ester](n) + n H2O = [(1-&gt;4)-alpha-D-galacturonosyl](n) + n methanol + n H(+). Its pathway is glycan metabolism; pectin degradation; 2-dehydro-3-deoxy-D-gluconate from pectin: step 1/5. Functionally, acts in the modification of cell walls via demethylesterification of cell wall pectin. The sequence is that of Putative pectinesterase 63 (PME63) from Arabidopsis thaliana (Mouse-ear cress).